We begin with the raw amino-acid sequence, 402 residues long: Phosphoglycerate kinase (402 aa).

Residues 24-26 (DFN), Arg-40, 63-66 (HFGR), Arg-122, and Arg-155 each bind substrate. Residues Lys-206, Gly-297, Glu-328, and 357-360 (GGDS) contribute to the ATP site.

Belongs to the phosphoglycerate kinase family. In terms of assembly, monomer.

It localises to the cytoplasm. It catalyses the reaction (2R)-3-phosphoglycerate + ATP = (2R)-3-phospho-glyceroyl phosphate + ADP. It participates in carbohydrate degradation; glycolysis; pyruvate from D-glyceraldehyde 3-phosphate: step 2/5. The sequence is that of Phosphoglycerate kinase from Parasynechococcus marenigrum (strain WH8102).